A 363-amino-acid chain; its full sequence is UDP-N-acetylglucosamine--N-acetylmuramyl-(pentapeptide) pyrophosphoryl-undecaprenol N-acetylglucosamine transferase (363 aa).

UDP-N-acetyl-alpha-D-glucosamine is bound by residues 12–14 (TAG), Ser196, and Gln291.

This sequence belongs to the glycosyltransferase 28 family. MurG subfamily.

It localises to the cell inner membrane. The enzyme catalyses di-trans,octa-cis-undecaprenyl diphospho-N-acetyl-alpha-D-muramoyl-L-alanyl-D-glutamyl-meso-2,6-diaminopimeloyl-D-alanyl-D-alanine + UDP-N-acetyl-alpha-D-glucosamine = di-trans,octa-cis-undecaprenyl diphospho-[N-acetyl-alpha-D-glucosaminyl-(1-&gt;4)]-N-acetyl-alpha-D-muramoyl-L-alanyl-D-glutamyl-meso-2,6-diaminopimeloyl-D-alanyl-D-alanine + UDP + H(+). It participates in cell wall biogenesis; peptidoglycan biosynthesis. Its function is as follows. Cell wall formation. Catalyzes the transfer of a GlcNAc subunit on undecaprenyl-pyrophosphoryl-MurNAc-pentapeptide (lipid intermediate I) to form undecaprenyl-pyrophosphoryl-MurNAc-(pentapeptide)GlcNAc (lipid intermediate II). The polypeptide is UDP-N-acetylglucosamine--N-acetylmuramyl-(pentapeptide) pyrophosphoryl-undecaprenol N-acetylglucosamine transferase (Legionella pneumophila (strain Corby)).